The sequence spans 279 residues: 3-methyl-2-oxobutanoate hydroxymethyltransferase (279 aa).

2 residues coordinate Mg(2+): Asp44 and Asp83. 3-methyl-2-oxobutanoate contacts are provided by residues 44–45, Asp83, and Lys113; that span reads DS. Glu115 contributes to the Mg(2+) binding site. The Proton acceptor role is filled by Glu182.

Belongs to the PanB family. In terms of assembly, homodecamer; pentamer of dimers. The cofactor is Mg(2+).

Its subcellular location is the cytoplasm. The catalysed reaction is 3-methyl-2-oxobutanoate + (6R)-5,10-methylene-5,6,7,8-tetrahydrofolate + H2O = 2-dehydropantoate + (6S)-5,6,7,8-tetrahydrofolate. It functions in the pathway cofactor biosynthesis; (R)-pantothenate biosynthesis; (R)-pantoate from 3-methyl-2-oxobutanoate: step 1/2. In terms of biological role, catalyzes the reversible reaction in which hydroxymethyl group from 5,10-methylenetetrahydrofolate is transferred onto alpha-ketoisovalerate to form ketopantoate. The chain is 3-methyl-2-oxobutanoate hydroxymethyltransferase from Dehalococcoides mccartyi (strain CBDB1).